We begin with the raw amino-acid sequence, 484 residues long: Replication factor C large subunit (484 aa).

46 to 53 is an ATP binding site; sequence GPPGSGKT. Basic and acidic residues-rich tracts occupy residues 419 to 432, 442 to 451, and 459 to 478; these read VKTETPKKKEKTKE, RISEPPEPLK, and KSVEKADTKEKEKKDPKKQA. The segment at 419–484 is disordered; it reads VKTETPKKKE…KKQATLDSFF (66 aa).

It belongs to the activator 1 small subunits family. RfcL subfamily. In terms of assembly, heteromultimer composed of small subunits (RfcS) and large subunits (RfcL).

Its function is as follows. Part of the RFC clamp loader complex which loads the PCNA sliding clamp onto DNA. In Methanococcus maripaludis (strain C5 / ATCC BAA-1333), this protein is Replication factor C large subunit.